We begin with the raw amino-acid sequence, 237 residues long: LexA repressor (237 aa).

The H-T-H motif DNA-binding region spans Phe-26–Thr-46. Active-site for autocatalytic cleavage activity residues include Ser-158 and Lys-196.

It belongs to the peptidase S24 family. Homodimer.

The catalysed reaction is Hydrolysis of Ala-|-Gly bond in repressor LexA.. Functionally, represses a number of genes involved in the response to DNA damage (SOS response), including recA and lexA. In the presence of single-stranded DNA, RecA interacts with LexA causing an autocatalytic cleavage which disrupts the DNA-binding part of LexA, leading to derepression of the SOS regulon and eventually DNA repair. In Rhodopseudomonas palustris (strain BisB18), this protein is LexA repressor.